A 35-amino-acid polypeptide reads, in one-letter code: Dermonecrotic toxin LdSicTox-alpha-1 (35 aa).

Histidine 11 is a catalytic residue. Residues glutamate 31 and aspartate 33 each contribute to the Mg(2+) site.

Belongs to the arthropod phospholipase D family. Class I subfamily. Requires Mg(2+) as cofactor. In terms of processing, contains 1 disulfide bond. Expressed by the venom gland.

It is found in the secreted. It catalyses the reaction an N-(acyl)-sphingosylphosphocholine = an N-(acyl)-sphingosyl-1,3-cyclic phosphate + choline. The enzyme catalyses an N-(acyl)-sphingosylphosphoethanolamine = an N-(acyl)-sphingosyl-1,3-cyclic phosphate + ethanolamine. The catalysed reaction is a 1-acyl-sn-glycero-3-phosphocholine = a 1-acyl-sn-glycero-2,3-cyclic phosphate + choline. It carries out the reaction a 1-acyl-sn-glycero-3-phosphoethanolamine = a 1-acyl-sn-glycero-2,3-cyclic phosphate + ethanolamine. Dermonecrotic toxins cleave the phosphodiester linkage between the phosphate and headgroup of certain phospholipids (sphingolipid and lysolipid substrates), forming an alcohol (often choline) and a cyclic phosphate. This toxin acts on sphingomyelin (SM). It may also act on ceramide phosphoethanolamine (CPE), lysophosphatidylcholine (LPC) and lysophosphatidylethanolamine (LPE), but not on lysophosphatidylserine (LPS), and lysophosphatidylglycerol (LPG). It acts by transphosphatidylation, releasing exclusively cyclic phosphate products as second products. Induces dermonecrosis, hemolysis, increased vascular permeability, edema, inflammatory response, and platelet aggregation. This Loxosceles deserta (Desert recluse spider) protein is Dermonecrotic toxin LdSicTox-alpha-1.